Reading from the N-terminus, the 297-residue chain is uncharacterized protein (297 aa).

This is an uncharacterized protein from Escherichia coli O157:H7.